A 264-amino-acid chain; its full sequence is Thymidylate synthase (264 aa).

Arg21 lines the dUMP pocket. Residue His51 participates in (6R)-5,10-methylene-5,6,7,8-tetrahydrofolate binding. A dUMP-binding site is contributed by 126 to 127; the sequence is RR. Cys146 functions as the Nucleophile in the catalytic mechanism. Residues 166–169, Asn177, and 207–209 contribute to the dUMP site; these read RSCD and HLY. A (6R)-5,10-methylene-5,6,7,8-tetrahydrofolate-binding site is contributed by Asp169. Ala263 is a (6R)-5,10-methylene-5,6,7,8-tetrahydrofolate binding site.

This sequence belongs to the thymidylate synthase family. Bacterial-type ThyA subfamily. Homodimer.

Its subcellular location is the cytoplasm. It catalyses the reaction dUMP + (6R)-5,10-methylene-5,6,7,8-tetrahydrofolate = 7,8-dihydrofolate + dTMP. Its pathway is pyrimidine metabolism; dTTP biosynthesis. Its function is as follows. Catalyzes the reductive methylation of 2'-deoxyuridine-5'-monophosphate (dUMP) to 2'-deoxythymidine-5'-monophosphate (dTMP) while utilizing 5,10-methylenetetrahydrofolate (mTHF) as the methyl donor and reductant in the reaction, yielding dihydrofolate (DHF) as a by-product. This enzymatic reaction provides an intracellular de novo source of dTMP, an essential precursor for DNA biosynthesis. In Edwardsiella ictaluri (strain 93-146), this protein is Thymidylate synthase.